The chain runs to 61 residues: Small ribosomal subunit protein uS14 (61 aa).

Positions 24, 27, 40, and 43 each coordinate Zn(2+).

Belongs to the universal ribosomal protein uS14 family. Zinc-binding uS14 subfamily. Part of the 30S ribosomal subunit. Contacts proteins S3 and S10. Zn(2+) is required as a cofactor.

In terms of biological role, binds 16S rRNA, required for the assembly of 30S particles and may also be responsible for determining the conformation of the 16S rRNA at the A site. This chain is Small ribosomal subunit protein uS14, found in Anoxybacillus flavithermus (strain DSM 21510 / WK1).